A 72-amino-acid chain; its full sequence is Translation initiation factor IF-1 (72 aa).

One can recognise an S1-like domain in the interval 1–72; it reads MAKDDVIEVE…TRGRITYRYK (72 aa). Y60 is subject to Phosphotyrosine.

It belongs to the IF-1 family. As to quaternary structure, component of the 30S ribosomal translation pre-initiation complex which assembles on the 30S ribosome in the order IF-2 and IF-3, IF-1 and N-formylmethionyl-tRNA(fMet); mRNA recruitment can occur at any time during PIC assembly.

It is found in the cytoplasm. Functionally, one of the essential components for the initiation of protein synthesis. Stabilizes the binding of IF-2 and IF-3 on the 30S subunit to which N-formylmethionyl-tRNA(fMet) subsequently binds. Helps modulate mRNA selection, yielding the 30S pre-initiation complex (PIC). Upon addition of the 50S ribosomal subunit IF-1, IF-2 and IF-3 are released leaving the mature 70S translation initiation complex. This Geobacillus thermodenitrificans (strain NG80-2) protein is Translation initiation factor IF-1.